The sequence spans 1083 residues: DNA primase (1083 aa).

The CHC2-type zinc-finger motif lies at 1022–1061; sequence CLRYPHRGGRTAPRTFVSLRVDHHNRLCISLAQQCFATKC.

Belongs to the herpesviridae DNA primase family. As to quaternary structure, associates with the helicase and the primase-associated factor to form the helicase-primase factor.

The protein localises to the host nucleus. Functionally, essential component of the helicase/primase complex. Unwinds the DNA at the replication forks and generates single-stranded DNA for both leading and lagging strand synthesis. The primase initiates primer synthesis and thereby produces large amount of short RNA primers on the lagging strand that the polymerase elongates using dNTPs. The polypeptide is DNA primase (Varicella-zoster virus (strain Oka vaccine) (HHV-3)).